The sequence spans 720 residues: GTPase-activating protein gyp2 (720 aa).

The 66-residue stretch at 20 to 85 folds into the GRAM domain; the sequence is LDPASFFRIN…AAVRKLEREN (66 aa). In terms of domain architecture, Rab-GAP TBC spans 216–404; sequence GIPNNLRADI…RILDCLFVNG (189 aa).

Its subcellular location is the cytoplasm. The protein resides in the nucleus. Its function is as follows. Stimulates specifically the GTPase activity of ypt2 and ryh1. Inactivates ryh1 during recycling between the endosome and the Golgi compartments. The polypeptide is GTPase-activating protein gyp2 (Schizosaccharomyces pombe (strain 972 / ATCC 24843) (Fission yeast)).